A 310-amino-acid chain; its full sequence is UPF0282 protein PF0593 (310 aa).

This sequence belongs to the UPF0282 family.

The chain is UPF0282 protein PF0593 from Pyrococcus furiosus (strain ATCC 43587 / DSM 3638 / JCM 8422 / Vc1).